Consider the following 230-residue polypeptide: 7-cyano-7-deazaguanine synthase (230 aa).

14–24 serves as a coordination point for ATP; that stretch reads LSGGLDSTTTL. 4 residues coordinate Zn(2+): Cys194, Cys204, Cys207, and Cys210.

It belongs to the QueC family. The cofactor is Zn(2+).

It carries out the reaction 7-carboxy-7-deazaguanine + NH4(+) + ATP = 7-cyano-7-deazaguanine + ADP + phosphate + H2O + H(+). It participates in purine metabolism; 7-cyano-7-deazaguanine biosynthesis. In terms of biological role, catalyzes the ATP-dependent conversion of 7-carboxy-7-deazaguanine (CDG) to 7-cyano-7-deazaguanine (preQ(0)). This chain is 7-cyano-7-deazaguanine synthase, found in Ruthia magnifica subsp. Calyptogena magnifica.